Consider the following 354-residue polypeptide: Protein-glutamate methylesterase/protein-glutamine glutaminase (354 aa).

The region spanning 7–124 (KVLCVDDSAL…REGMLEYTEM (118 aa)) is the Response regulatory domain. Position 58 is a 4-aspartylphosphate (Asp58). Residues 156–348 (LLSSEKVIII…AALMKRAEAS (193 aa)) enclose the CheB-type methylesterase domain. Residues Ser168, His194, and Asp290 contribute to the active site.

It belongs to the CheB family. Post-translationally, phosphorylated by CheA. Phosphorylation of the N-terminal regulatory domain activates the methylesterase activity.

The protein localises to the cytoplasm. It catalyses the reaction [protein]-L-glutamate 5-O-methyl ester + H2O = L-glutamyl-[protein] + methanol + H(+). The catalysed reaction is L-glutaminyl-[protein] + H2O = L-glutamyl-[protein] + NH4(+). In terms of biological role, involved in chemotaxis. Part of a chemotaxis signal transduction system that modulates chemotaxis in response to various stimuli. Catalyzes the demethylation of specific methylglutamate residues introduced into the chemoreceptors (methyl-accepting chemotaxis proteins or MCP) by CheR. Also mediates the irreversible deamidation of specific glutamine residues to glutamic acid. The sequence is that of Protein-glutamate methylesterase/protein-glutamine glutaminase from Chromohalobacter salexigens (strain ATCC BAA-138 / DSM 3043 / CIP 106854 / NCIMB 13768 / 1H11).